Reading from the N-terminus, the 185-residue chain is Elongation factor P (185 aa).

The protein belongs to the elongation factor P family.

It localises to the cytoplasm. The protein operates within protein biosynthesis; polypeptide chain elongation. Its function is as follows. Involved in peptide bond synthesis. Stimulates efficient translation and peptide-bond synthesis on native or reconstituted 70S ribosomes in vitro. Probably functions indirectly by altering the affinity of the ribosome for aminoacyl-tRNA, thus increasing their reactivity as acceptors for peptidyl transferase. The protein is Elongation factor P of Pseudothermotoga lettingae (strain ATCC BAA-301 / DSM 14385 / NBRC 107922 / TMO) (Thermotoga lettingae).